The following is a 519-amino-acid chain: UvrABC system protein C (519 aa).

The 79-residue stretch at 9–87 (HLPGCYLFKN…IKKHWPRYNI (79 aa)) folds into the GIY-YIG domain. The region spanning 191-226 (RELIESMEKDMRELASRQQFEQAMALRDEIAALEYL) is the UVR domain.

It belongs to the UvrC family. As to quaternary structure, interacts with UvrB in an incision complex.

It localises to the cytoplasm. Functionally, the UvrABC repair system catalyzes the recognition and processing of DNA lesions. UvrC both incises the 5' and 3' sides of the lesion. The N-terminal half is responsible for the 3' incision and the C-terminal half is responsible for the 5' incision. This chain is UvrABC system protein C, found in Methanosarcina barkeri (strain Fusaro / DSM 804).